We begin with the raw amino-acid sequence, 392 residues long: Keratin, type I cuticular Ha4 (392 aa).

The head stretch occupies residues 1–56 (MSCESCLPALSCRTSCSSRPCVPPSCHGCTLPGACNIPANVGNCNWFCEGSFNGNE). Residues 56–367 (EKETMQFLND…SLLESEDCNL (312 aa)) form the IF rod domain. Positions 57–91 (KETMQFLNDRLASYMEKVRQLERENAELECRIQER) are coil 1A. The segment at 92–102 (NQQQDPLVCPA) is linker 1. A coil 1B region spans residues 103-203 (YQAYFRTIEE…HEEEVNTLRC (101 aa)). The interval 204–219 (QLGDRLNVEVDAAPTV) is linker 12. A coil 2 region spans residues 220–363 (DLNRVLNETR…NTYRSLLESE (144 aa)). Positions 364-392 (DCNLPCNPCATTNASGSCCGPCGSSKRCC) are tail.

It belongs to the intermediate filament family. In terms of tissue distribution, expressed in the hair root in the hair shaft cuticle and cortex.

This Mus musculus (Mouse) protein is Keratin, type I cuticular Ha4.